Here is a 236-residue protein sequence, read N- to C-terminus: MADS-box transcription factor 3 (236 aa).

In terms of domain architecture, MADS-box spans 1–61 (MGRGKIEIKR…GRLYEYANNS (61 aa)). In terms of domain architecture, K-box spans 87–178 (AQHYQQESSK…RSKVVENERG (92 aa)).

In terms of tissue distribution, expressed in lemmas, paleas and lodicules.

The protein localises to the nucleus. Probable transcription factor involved in the development of floral organs. Acts as C-class protein in association with MADS58. Involved in the control of lodicule number (whorl 2), stamen specification (whorl 3) and floral meristem determinacy (whorl 4), but not in the regulation of carpel morphogenesis. Plays a more predominant role in controlling lodicule development and in specifying stamen identity than MADS58. The polypeptide is MADS-box transcription factor 3 (MADS3) (Oryza sativa subsp. japonica (Rice)).